We begin with the raw amino-acid sequence, 84 residues long: ATP synthase subunit c (84 aa).

Helical transmembrane passes span 9-29 and 54-74; these read IIGA…GFAI and IVAG…LLFI.

This sequence belongs to the ATPase C chain family. In terms of assembly, F-type ATPases have 2 components, F(1) - the catalytic core - and F(0) - the membrane proton channel. F(1) has five subunits: alpha(3), beta(3), gamma(1), delta(1), epsilon(1). F(0) has three main subunits: a(1), b(2) and c(10-14). The alpha and beta chains form an alternating ring which encloses part of the gamma chain. F(1) is attached to F(0) by a central stalk formed by the gamma and epsilon chains, while a peripheral stalk is formed by the delta and b chains.

Its subcellular location is the cell inner membrane. Its function is as follows. F(1)F(0) ATP synthase produces ATP from ADP in the presence of a proton or sodium gradient. F-type ATPases consist of two structural domains, F(1) containing the extramembraneous catalytic core and F(0) containing the membrane proton channel, linked together by a central stalk and a peripheral stalk. During catalysis, ATP synthesis in the catalytic domain of F(1) is coupled via a rotary mechanism of the central stalk subunits to proton translocation. Functionally, key component of the F(0) channel; it plays a direct role in translocation across the membrane. A homomeric c-ring of between 10-14 subunits forms the central stalk rotor element with the F(1) delta and epsilon subunits. The polypeptide is ATP synthase subunit c (Actinobacillus pleuropneumoniae serotype 7 (strain AP76)).